A 217-amino-acid chain; its full sequence is U2 snRNP component ist3 (217 aa).

The RRM domain maps to 31–109; that stretch reads AYIYIGNLDF…RLVRVDHVAS (79 aa). 2 disordered regions span residues 119–138 and 154–217; these read PANL…STIN and EVEQ…DLDG. A compositionally biased stretch (polar residues) spans 128–138; sequence SGSSLSVSTIN. The residue at position 160 (Ser160) is a Phosphoserine. 2 stretches are compositionally biased toward basic and acidic residues: residues 161-176 and 185-198; these read PKDE…DYIH and HESS…DSNR. A compositionally biased stretch (basic residues) spans 199–217; the sequence is HSRHHRRHSRSRRHRDLDG.

The protein belongs to the IST3 family. In terms of assembly, belongs to the 40S cdc5-associated complex (or cwf complex), a spliceosome sub-complex reminiscent of a late-stage spliceosome composed of the U2, U5 and U6 snRNAs and at least brr2, cdc5, cwf2/prp3, cwf3/syf1, cwf4/syf3, cwf5/ecm2, spp42/cwf6, cwf7/spf27, cwf8, cwf9, cwf10, cwf11, cwf12, prp45/cwf13, cwf14, cwf15, cwf16, cwf17, cwf18, cwf19, cwf20, cwf21, cwf22, cwf23, cwf24, cwf25, cwf26, cyp7/cwf27, cwf28, cwf29/ist3, lea1, msl1, prp5/cwf1, prp10, prp12/sap130, prp17, prp22, sap61, sap62, sap114, sap145, slu7, smb1, smd1, smd3, smf1, smg1 and syf2.

It is found in the nucleus. Its function is as follows. Required for pre-mRNA splicing and spliceosome assembly. This is U2 snRNP component ist3 (cwf29) from Schizosaccharomyces pombe (strain 972 / ATCC 24843) (Fission yeast).